A 256-amino-acid polypeptide reads, in one-letter code: Small ribosomal subunit protein uS2 (256 aa).

Belongs to the universal ribosomal protein uS2 family.

The protein is Small ribosomal subunit protein uS2 of Acidiphilium cryptum (strain JF-5).